The sequence spans 165 residues: Thiol peroxidase (165 aa).

Residues 18-164 (RKVGDKAPNF…YEAAIEAAKK (147 aa)) form the Thioredoxin domain. Cys-60 acts as the Cysteine sulfenic acid (-SOH) intermediate in catalysis. Cys-60 and Cys-94 are joined by a disulfide.

This sequence belongs to the peroxiredoxin family. Tpx subfamily. As to quaternary structure, homodimer.

The catalysed reaction is a hydroperoxide + [thioredoxin]-dithiol = an alcohol + [thioredoxin]-disulfide + H2O. Its function is as follows. Thiol-specific peroxidase that catalyzes the reduction of hydrogen peroxide and organic hydroperoxides to water and alcohols, respectively. Plays a role in cell protection against oxidative stress by detoxifying peroxides. The chain is Thiol peroxidase from Listeria monocytogenes serovar 1/2a (strain ATCC BAA-679 / EGD-e).